A 168-amino-acid chain; its full sequence is Lipid transfer protein EARLI 1 (168 aa).

A signal peptide spans 1-25 (MASKNSASIALFFALNIIFFTLTAA). The disordered stretch occupies residues 32-81 (PSPKHKPVPSPKPKPVPSPKPKPVPSPSVPSPSVPSPNPRPVTPPRTPGS). An A-1 repeat occupies 34–41 (PKHKPVPS). The 3 X 8 AA repeats A of P-K-[HP]-K-P-V-P-S stretch occupies residues 34–57 (PKHKPVPSPKPKPVPSPKPKPVPS). Residues 39–78 (VPSPKPKPVPSPKPKPVPSPSVPSPSVPSPNPRPVTPPRT) show a composition bias toward pro residues. One copy of the A-2 repeat lies at 42-49 (PKPKPVPS). The stretch at 50-57 (PKPKPVPS) is one A-3 repeat. The B-1 repeat unit spans residues 58-62 (PSVPS). Positions 58–67 (PSVPSPSVPS) are 2 X 58 AA tandem repeats B of P-S-V-P-S. One copy of the B-2 repeat lies at 63-67 (PSVPS).

The protein belongs to the plant LTP family. PEARLI1 subfamily. In terms of tissue distribution, mostly expressed in aerial part of seedlings, and, to a lower extent, in roots. Higher basal levels in early-flowering ecotypes.

It localises to the secreted. The protein localises to the cell wall. Probable lipid transfer protein (LTP). May improve freezing survival. Seems to control the flowering process and lignin synthesis. Has an auxiliary role for germinability and early seedling development under low temperature and salt stress conditions, probably in an abscisic acid- (ABA) dependent manner. Confers resistance to Botrytis cinerea and exhibits anti-fungal activity, at least against S.cerevisiae, B.cinerea and Fusarium oxysporum, probably by increasing their membrane permeability. The protein is Lipid transfer protein EARLI 1 (EARLI1) of Arabidopsis thaliana (Mouse-ear cress).